The primary structure comprises 199 residues: COMM domain-containing protein 2 (199 aa).

A COMM domain is found at Ser-123 to His-190.

The protein belongs to the COMM domain-containing protein 2 family. In terms of assembly, component of the commander complex consisting of the CCC subcomplex and the retriever subcomplex. Component of the CCC (COMMD/CCDC22/CCDC93) subcomplex consisting of COMMD1, COMMD2, COMMD3, COMMD4, COMMD5, COMMD6, COMMD7, COMMD8, COMMD9, COMMD10, CCDC22 and CCDC93; within the complex forms a heterodimer with COMMD3. Interacts with RELA, RELB, NFKB1/p105, NFKB2/p100. Interacts with CCDC22, CCDC93, SCNN1B, CUL3, CUL4B, CUL5, CUL7. In terms of tissue distribution, ubiquitous.

The protein localises to the cytoplasm. In terms of biological role, scaffold protein in the commander complex that is essential for endosomal recycling of transmembrane cargos; the commander complex is composed of the CCC subcomplex and the retriever subcomplex. May modulate activity of cullin-RING E3 ubiquitin ligase (CRL) complexes. May down-regulate activation of NF-kappa-B. This chain is COMM domain-containing protein 2 (COMMD2), found in Homo sapiens (Human).